Consider the following 227-residue polypeptide: UPF0173 metal-dependent hydrolase DR_0006 (227 aa).

The protein belongs to the UPF0173 family.

The protein is UPF0173 metal-dependent hydrolase DR_0006 of Deinococcus radiodurans (strain ATCC 13939 / DSM 20539 / JCM 16871 / CCUG 27074 / LMG 4051 / NBRC 15346 / NCIMB 9279 / VKM B-1422 / R1).